A 492-amino-acid chain; its full sequence is T-box transcription factor TBX5-A (492 aa).

The disordered stretch occupies residues 1–43 (MADSEDTFRLQNSPSDSEPKDLQNEGKSDKQNAAVSKSPSSQT). Residues 17-30 (SEPKDLQNEGKSDK) show a composition bias toward basic and acidic residues. The segment covering 31-43 (QNAAVSKSPSSQT) has biased composition (polar residues). The T-box DNA-binding region spans 62–237 (LWTKFHEVGT…NNPFAKGFRG (176 aa)). Positions 331-352 (AGEHPYKKPYVESSSSEDDHYY) are disordered.

Monomer. Homodimer (via the T-box); binds DNA as homodimer. As to expression, expressed in the dorsal optic cup of developing eye, pectoral fin buds and heart. At 31 hpf, when the pectoral fin buds have begun bulging outwards, restricted expression is detected throughout the mesenchyme of the early fin buds and these high levels of expression continue until later stages.

It is found in the nucleus. Its subcellular location is the cytoplasm. Functionally, required for pectoral fin formation. Together with tbx5b, involved in eye and heart development. Required for the looping stage of heart development. May bind to the core DNA motif of promoters. This is T-box transcription factor TBX5-A (tbx5a) from Danio rerio (Zebrafish).